The primary structure comprises 59 residues: uncharacterized protein (59 aa).

This is an uncharacterized protein from Rickettsia conorii (strain ATCC VR-613 / Malish 7).